Here is a 320-residue protein sequence, read N- to C-terminus: Sucrose operon repressor (320 aa).

Residues 1–57 (MVAKLTDVAKLAGVSPTTVSRVINRKGYLSEKTITKVQAAMKTLGYKPNNLARSLQG) form the HTH lacI-type domain. Positions 5–24 (LTDVAKLAGVSPTTVSRVIN) form a DNA-binding region, H-T-H motif.

In terms of biological role, negative regulator of scrB expression. The protein is Sucrose operon repressor (scrR) of Streptococcus mutans serotype c (strain ATCC 700610 / UA159).